The chain runs to 134 residues: ATP synthase epsilon chain (134 aa).

It belongs to the ATPase epsilon chain family. F-type ATPases have 2 components, CF(1) - the catalytic core - and CF(0) - the membrane proton channel. CF(1) has five subunits: alpha(3), beta(3), gamma(1), delta(1), epsilon(1). CF(0) has three main subunits: a, b and c.

It is found in the cell membrane. In terms of biological role, produces ATP from ADP in the presence of a proton gradient across the membrane. This is ATP synthase epsilon chain from Listeria monocytogenes serotype 4a (strain HCC23).